We begin with the raw amino-acid sequence, 146 residues long: Leghemoglobin-3 (146 aa).

In terms of domain architecture, Globin spans 2–146 (GFTDKQEALV…LATAIKKAMV (145 aa)). Y29 is subject to Nitrated tyrosine. Position 44 (S44) interacts with heme b. S44 is subject to Phosphoserine. Position 61 (H61) interacts with O2. Heme b contacts are provided by K64, H93, and K96. Position 134 is a nitrated tyrosine (Y134).

Belongs to the plant globin family. In terms of assembly, monomer. Post-translationally, nitrated in effective nodules and particularly in hypoxic conditions; this mechanism may play a protective role in the symbiosis by buffering toxic peroxynitrite NO(2)(-). Nitration level decrease during nodule senescence. Phosphorylation at Ser-44 disrupts the molecular environment of its porphyrin ring oxygen binding pocket, thus leading to a reduced oxygen consumption and to the delivery of oxygen O(2) to symbiosomes. In terms of tissue distribution, root nodules.

The protein resides in the cytoplasm. Its subcellular location is the cytosol. It localises to the nucleus. Its function is as follows. Leghemoglobin that reversibly binds oxygen O(2) through a pentacoordinated heme iron. In root nodules, facilitates the diffusion of oxygen to the bacteroids while preventing the bacterial nitrogenase from being inactivated by buffering dioxygen, nitric oxide and carbon monoxide, and promoting the formation of reactive oxygen species (ROS, e.g. H(2)O(2)). This role is essential for symbiotic nitrogen fixation (SNF). The polypeptide is Leghemoglobin-3 (Medicago sativa (Alfalfa)).